Reading from the N-terminus, the 333-residue chain is Putative pectinesterase 14 (333 aa).

The first 16 residues, 1 to 16 (MLFFILFLSIISPIES), serve as a signal peptide directing secretion. N-linked (GlcNAc...) asparagine glycosylation is found at Asn-108 and Asn-114. Thr-116 contacts substrate. N-linked (GlcNAc...) asparagine glycosylation occurs at Asn-133. Residue Gln-151 coordinates substrate. The Proton donor role is filled by Asp-174. Asp-195 acts as the Nucleophile in catalysis. A substrate-binding site is contributed by Arg-253. Residues Asn-302 and Asn-323 are each glycosylated (N-linked (GlcNAc...) asparagine).

It belongs to the pectinesterase family. As to expression, expressed in flower buds.

It is found in the secreted. The protein resides in the cell wall. It catalyses the reaction [(1-&gt;4)-alpha-D-galacturonosyl methyl ester](n) + n H2O = [(1-&gt;4)-alpha-D-galacturonosyl](n) + n methanol + n H(+). Its pathway is glycan metabolism; pectin degradation; 2-dehydro-3-deoxy-D-gluconate from pectin: step 1/5. Its function is as follows. Acts in the modification of cell walls via demethylesterification of cell wall pectin. The protein is Putative pectinesterase 14 (PME14) of Arabidopsis thaliana (Mouse-ear cress).